A 333-amino-acid chain; its full sequence is FAD-dependent monooxygenase pytG (333 aa).

A helical transmembrane segment spans residues 6 to 26 (LPNVSVAIIGAGIGGLTLGAF). Residues Glu38 and Arg109 each contribute to the FAD site. N-linked (GlcNAc...) asparagine glycosylation occurs at Asn303.

It belongs to the paxM FAD-dependent monooxygenase family. Requires FAD as cofactor.

It localises to the membrane. It functions in the pathway secondary metabolite biosynthesis. FAD-dependent monooxygenase; part of the gene cluster that mediates the biosynthesis of pyranterreones, a family of antioxidative compounds. The first step of pyranonigrins biosynthesis is performed by the hybrid PKS-NRPS synthetase pytA that condenses 4 malonyl-CoA units ato the acetyl starter unit by the modular PKS of pytA. The acyl chain is then connected to an L-serine through the amide bond by the modular NRPS of pytA. A tetramic acid is formed and released from the PKS-NRPS pytA to give pyranterreone 5 with the help of the thioesterase pytI. Pyranterreone 5 could be methylated by pytC to afford pyranterreone 6. Both pyranterreones 5 and 6 are subsequently oxidized by the FAD-linked oxidoreductase pytB and the cytochrome P450 monooxygenase pytD to form the fused gamma-pyrone core, resulting in pyranterreones 7 and 11, respectively. The hydroxy group at C-8 of pyranterreones 7 and 11 are dehydrated by the aspartyl protease pytH to form a delta-7 double bond to give pyranterreones 3 and 1, 2 accordingly. The exo-methylene of pyranterreone 3 could be reduced into a pendant methyl by reductase pytE to provide pyranterreone 4, also known as cordylactam. Pyranterreone 4 can be reconverted to pyranterreone 3 through pytB-catalyzed dehydrogenation or further oxidized to pyranterreones 9 and 10. In Aspergillus terreus (strain NIH 2624 / FGSC A1156), this protein is FAD-dependent monooxygenase pytG.